Reading from the N-terminus, the 227-residue chain is dTTP/UTP pyrophosphatase (227 aa).

Residues 1–21 are disordered; sequence MNDLPRAELPGSGSPNPESLI. Residue Asp87 is the Proton acceptor of the active site.

Belongs to the Maf family. YhdE subfamily. A divalent metal cation is required as a cofactor.

It localises to the cytoplasm. The catalysed reaction is dTTP + H2O = dTMP + diphosphate + H(+). The enzyme catalyses UTP + H2O = UMP + diphosphate + H(+). Nucleoside triphosphate pyrophosphatase that hydrolyzes dTTP and UTP. May have a dual role in cell division arrest and in preventing the incorporation of modified nucleotides into cellular nucleic acids. The chain is dTTP/UTP pyrophosphatase from Rhodopirellula baltica (strain DSM 10527 / NCIMB 13988 / SH1).